A 173-amino-acid chain; its full sequence is Translation initiation factor IF-3 (173 aa).

This sequence belongs to the IF-3 family. Monomer.

The protein localises to the cytoplasm. In terms of biological role, IF-3 binds to the 30S ribosomal subunit and shifts the equilibrium between 70S ribosomes and their 50S and 30S subunits in favor of the free subunits, thus enhancing the availability of 30S subunits on which protein synthesis initiation begins. The protein is Translation initiation factor IF-3 of Enterococcus faecalis (strain ATCC 700802 / V583).